The following is a 655-amino-acid chain: tRNA uridine 5-carboxymethylaminomethyl modification enzyme MnmG (655 aa).

13–18 serves as a coordination point for FAD; it reads GGGHAG. Residue 281–295 participates in NAD(+) binding; it reads GPRYCPSVEDKINRF.

The protein belongs to the MnmG family. In terms of assembly, homodimer. Heterotetramer of two MnmE and two MnmG subunits. FAD serves as cofactor.

The protein localises to the cytoplasm. Functionally, NAD-binding protein involved in the addition of a carboxymethylaminomethyl (cmnm) group at the wobble position (U34) of certain tRNAs, forming tRNA-cmnm(5)s(2)U34. This Paracidovorax citrulli (strain AAC00-1) (Acidovorax citrulli) protein is tRNA uridine 5-carboxymethylaminomethyl modification enzyme MnmG.